Here is an 843-residue protein sequence, read N- to C-terminus: General transcription and DNA repair factor IIH helicase/translocase subunit XPB/SSL2 (843 aa).

Residues 1 to 85 (MTDVEGYQPK…TAADSSMNQM (85 aa)) form a disordered region. Acidic residues predominate over residues 26 to 41 (SDEDSPATDAEIDENY). The span at 42–56 (DDNRETSEGRGERDT) shows a compositional bias: basic and acidic residues. The segment covering 64-74 (KKPRKKTKSSR) has biased composition (basic residues). A Nuclear localization signal motif is present at residues 64 to 75 (KKPRKKTKSSRH). Residues 373 to 535 (MFGNGRARSG…DLNFLIGPKL (163 aa)) enclose the Helicase ATP-binding domain. Residue 386–393 (LPCGAGKT) coordinates ATP. The DEAH box motif lies at 488–491 (DEVH). Residues 589–743 (QACQFLIQYH…KVITHLHGME (155 aa)) enclose the Helicase C-terminal domain. A Phosphoserine modification is found at Ser-752.

Belongs to the helicase family. RAD25/XPB subfamily. Component of the 7-subunit TFIIH core complex composed of XPB/SSL2, XPD/RAD3, SSL1, TFB1, TFB2, TFB4 and TFB5, which is active in NER. The core complex associates with the 3-subunit CTD-kinase module TFIIK composed of CCL1, KIN28 and TFB3 to form the 10-subunit holoenzyme (holo-TFIIH) active in transcription. An additionnal subunit, TFB6, plays a role in the dissociation of the SSL2 helicase from TFIIH after transcription initiation. Interacts directly with TFB6. It depends on Mg(2+) as a cofactor.

It localises to the nucleus. The catalysed reaction is Couples ATP hydrolysis with the unwinding of duplex DNA by translocating in the 3'-5' direction.. The enzyme catalyses ATP + H2O = ADP + phosphate + H(+). Functionally, ATP-dependent DNA translocase. Component of the general transcription and DNA repair factor IIH (TFIIH) core complex. When complexed to CDK-activating kinase (CAK), involved in RNA transcription by RNA polymerase II. May have 3'-5' helicase activity alone, the TFIIH core however has no 3'-5' helicase activity. Also involved in transcription-coupled nucleotide excision repair (NER) of damaged DNA. In NER, TFIIH acts by opening DNA around the lesion to allow the excision of the damaged oligonucleotide and its replacement by a new DNA fragment. The ATPase activity of XPB/SSL2, but not its helicase activity, is required for DNA opening. In transcription, TFIIH has an essential role in transcription initiation. When the pre-initiation complex (PIC) has been established, TFIIH is required for promoter opening and promoter escape. The ATP-dependent helicase activity of XPB/SSL2 is required for promoter opening and promoter escape. XPB/SSL2 acts as a double-stranded DNA translocase, promoting DNA opening by tracking in a 5'-3' dirction along the nontemplate promoter strand, rotating and inserting DNA into the Pol II active site cleft, leading to DNA unwinding. A dsDNA-stimulated ATPase, dATP and ATP are equally good substrates. May also use this translocase mechanism during DNA repair rather than physically wedging open damaged DNA. The sequence is that of General transcription and DNA repair factor IIH helicase/translocase subunit XPB/SSL2 from Saccharomyces cerevisiae (strain ATCC 204508 / S288c) (Baker's yeast).